A 525-amino-acid chain; its full sequence is Heat shock factor protein 1 (525 aa).

N-acetylmethionine is present on Met1. The segment at 15-120 (VPAFLTKLWT…LLENIKRKVT (106 aa)) is DNA-binding domain. Lys80 bears the N6-acetyllysine mark. Position 91 is an N6-acetyllysine; alternate (Lys91). A Glycyl lysine isopeptide (Lys-Gly) (interchain with G-Cter in SUMO2); alternate cross-link involves residue Lys91. An N6-acetyllysine modification is found at Lys118. A Phosphoserine; by MAPKAPK2 modification is found at Ser121. The tract at residues 130–203 (IKIRQDSVTK…ISLVQSNRIL (74 aa)) is hydrophobic repeat HR-A/B. Lys131 is covalently cross-linked (Glycyl lysine isopeptide (Lys-Gly) (interchain with G-Cter in SUMO2)). Thr142 carries the post-translational modification Phosphothreonine; by CK2. Lys150 and Lys188 each carry N6-acetyllysine. The interval 203–224 (LGVKRKIPLMLNDGGPAHPMPK) is d domain. Lys208 bears the N6-acetyllysine; alternate mark. Lys208 is covalently cross-linked (Glycyl lysine isopeptide (Lys-Gly) (interchain with G-Cter in SUMO2); alternate). Residues 221–310 (PMPKYGRQYS…PPSPPQSPRA (90 aa)) form a regulatory domain region. Lys224 participates in a covalent cross-link: Glycyl lysine isopeptide (Lys-Gly) (interchain with G-Cter in SUMO2). Phosphoserine; by CAMK2A is present on Ser230. Positions 266 to 365 (SDITELAPGS…RPPSPLPASA (100 aa)) are disordered. Positions 272–283 (APGSPVASSGGS) are enriched in low complexity. Ser275 and Ser292 each carry phosphoserine. Lys298 bears the N6-acetyllysine; alternate mark. Residue Lys298 forms a Glycyl lysine isopeptide (Lys-Gly) (interchain with G-Cter in SUMO2); alternate linkage. Lys298 participates in a covalent cross-link: Glycyl lysine isopeptide (Lys-Gly) (interchain with G-Cter in SUMO); alternate. Residue Ser303 is modified to Phosphoserine; by GSK3-beta. Ser307 bears the Phosphoserine; by MAPK3 mark. A phosphoserine mark is found at Ser314 and Ser319. Ser320 carries the post-translational modification Phosphoserine; by PKA. Position 324 is a phosphothreonine (Thr324). Ser327 carries the post-translational modification Phosphoserine; by MAPK12. Ser346 is subject to Phosphoserine. Ser359 is modified (phosphoserine; by MAPK8). A transactivation domain region spans residues 367 to 525 (EKCLSVACLD…PPKAKDPTVS (159 aa)). Residues 380 to 405 (LSDHLDAMDSNLDNLQTMLTSHGFSV) are hydrophobic repeat HR-C. The 9aaTAD signature appears at 408 to 416 (STLLDLFSP). Ser415 is subject to Phosphoserine; by PLK1. Ser440 is modified (phosphoserine). A disordered region spans residues 495–525 (YFSEGDDYSDDPTISLLTGSEPPKAKDPTVS). N6-acetyllysine is present on Lys520.

Belongs to the HSF family. In terms of assembly, monomer; cytoplasmic latent and transcriptionally inactive monomeric form in unstressed cells. Homotrimer; in response to stress, such as heat shock, homotrimerizes and translocates into the nucleus, binds to heat shock element (HSE) sequences in promoter of heat shock protein (HSP) genes and acquires transcriptional ability. Interacts (via monomeric form) with FKBP4; this interaction occurs in unstressed cells. Associates (via monomeric form) with HSP90 proteins in a multichaperone complex in unnstressed cell; this association maintains HSF1 in a non-DNA-binding and transcriptional inactive form by preventing HSF1 homotrimerization. Homotrimeric transactivation activity is modulated by protein-protein interactions and post-translational modifications. Interacts with HSP90AA1; this interaction is decreased in a IER5-dependent manner, promoting HSF1 accumulation in the nucleus, homotrimerization and DNA-binding activities. Part (via regulatory domain in the homotrimeric form) of a large heat shock-induced HSP90-dependent multichaperone complex at least composed of FKBP4, FKBP5, HSP90 proteins, PPID, PPP5C and PTGES3; this association maintains the HSF1 homotrimeric DNA-bound form in a transcriptionally inactive form. Interacts with BAG3 (via BAG domain); this interaction occurs in normal and heat-shocked cells promoting nuclear shuttling of HSF1 in a BAG3-dependent manner. Interacts (via homotrimeric and hyperphosphorylated form) with FKBP4; this interaction occurs upon heat shock in a HSP90-dependent multichaperone complex. Interacts (via homotrimeric form preferentially) with EEF1A proteins. In heat shocked cells, stress-denatured proteins compete with HSF1 homotrimeric DNA-bound form for association of the HSP90-dependent multichaperone complex, and hence alleviating repression of HSF1-mediated transcriptional activity. Interacts (via homotrimeric form preferentially) with DAXX; this interaction relieves homotrimeric HSF1 from repression of its transcriptional activity by HSP90-dependent multichaperone complex upon heat shock. Interacts (via D domain and preferentially with hyperphosphorylated form) with JNK1; this interaction occurs under both normal growth conditions and immediately upon heat shock. Interacts (via D domain and preferentially with hyperphosphorylated form) with MAPK3; this interaction occurs upon heat shock. Interacts with IER5 (via central region); this interaction promotes PPP2CA-induced dephosphorylation on Ser-121, Ser-307, Ser-314 and Thr-324 and HSF1 transactivation activity. Found in a ribonucleoprotein complex composed of the HSF1 homotrimeric form, translation elongation factor eEF1A proteins and non-coding RNA heat shock RNA-1 (HSR1); this complex occurs upon heat shock and stimulates HSF1 DNA-binding activity. Interacts (via transactivation domain) with HSPA1A/HSP70 and DNAJB1; these interactions result in the inhibition of heat shock- and HSF1-induced transcriptional activity during the attenuation and recovery phase from heat shock. Interacts (via Ser-303 and Ser-307 phosphorylated form) with YWHAE; this interaction promotes HSF1 sequestration in the cytoplasm in an ERK-dependent manner. Found in a complex with IER5 and PPP2CA. Interacts with TPR; this interaction increases upon heat shock and stimulates export of HSP70 mRNA. Interacts with SYMPK (via N-terminus) and CSTF2; these interactions occur upon heat shock. Interacts (via transactivation domain) with HSPA8. Interacts with EEF1D; this interaction occurs at heat shock promoter element (HSE) sequences. Interacts with MAPKAPK2. Interacts with PRKACA/PKA. Interacts (via transactivation domain) with GTF2A2. Interacts (via transactivation domain) with GTF2B. Interacts (via transactivation domain) with TBP. Interacts with CDK9, CCNT1 and EP300. Interacts (via N-terminus) with XRCC5 (via N-terminus) and XRCC6 (via N-terminus); these interactions are direct and prevent XRCC5/XRCC6 heterodimeric binding and non-homologous end joining (NHEJ) repair activities induced by ionizing radiation (IR). Interacts with PLK1; this interaction occurs during the early mitotic period, increases upon heat shock but does not modulate neither HSF1 homotrimerization and DNA-binding activities. Interacts with CDC20; this interaction occurs in mitosis in a MAD2L1-dependent manner and prevents PLK1-stimulated degradation of HSF1 by blocking the recruitment of the SCF(BTRC) ubiquitin ligase complex. Interacts with MAD2L1; this interaction occurs in mitosis. Interacts with BTRC; this interaction occurs during mitosis, induces its ubiquitin-dependent degradation following stimulus-dependent phosphorylation, a process inhibited by CDC20. Interacts with HSP90AA1 and HSP90AB1. Forms a complex with TTC5/STRAP and p300/EP300; these interactions augment chromatin-bound HSF1 and p300/EP300 histone acetyltransferase activity. Phosphorylated. Phosphorylated in unstressed cells; this phosphorylation is constitutive and implicated in the repression of HSF1 transcriptional activity. Phosphorylated on Ser-121 by MAPKAPK2; this phosphorylation promotes interaction with HSP90 proteins and inhibits HSF1 homotrimerization, DNA-binding and transactivation activities. Phosphorylation on Ser-303 by GSK3B/GSK3-beta and on Ser-307 by MAPK3 within the regulatory domain is involved in the repression of HSF1 transcriptional activity and occurs in a RAF1-dependent manner. Phosphorylation on Ser-303 and Ser-307 increases HSF1 nuclear export in a YWHAE- and XPO1/CRM1-dependent manner. Phosphorylation on Ser-307 is a prerequisite for phosphorylation on Ser-303. According to, Ser-303 is not phosphorylated in unstressed cells. Phosphorylated on Ser-415 by PLK1; phosphorylation promotes nuclear translocation upon heat shock. Hyperphosphorylated upon heat shock and during the attenuation and recovery phase period of the heat shock response. Phosphorylated on Thr-142; this phosphorylation increases HSF1 transactivation activity upon heat shock. Phosphorylation on Ser-230 by CAMK2A; this phosphorylation enhances HSF1 transactivation activity upon heat shock. Phosphorylation on Ser-327 by MAPK12; this phosphorylation enhances HSF1 nuclear translocation, homotrimerization and transactivation activities upon heat shock. Phosphorylated on Ser-320 by PRKACA/PKA; this phosphorylation promotes nuclear localization and transcriptional activity upon heat shock. Phosphorylated on Ser-359 by MAPK8; this phosphorylation occurs upon heat shock, induces HSF1 translocation into nuclear stress bodies and negatively regulates transactivation activity. Neither basal nor stress-inducible phosphorylation on Ser-230, Ser-292, Ser-303, Ser-307, Ser-314, Ser-319, Ser-320, Thr-324, Ser-327, Ser-339, Ser-346, Ser-359 and Ser-364 within the regulatory domain is involved in the regulation of HSF1 subcellular localization or DNA-binding activity; however, it negatively regulates HSF1 transactivation activity. Phosphorylated by PLK1 in the early mitotic period; this phosphorylation regulates HSF1 localization to the spindle pole, the recruitment of the SCF(BTRC) ubiquitin ligase complex inducing HSF1 degradation, and hence mitotic progression. Dephosphorylated on Ser-121, Ser-307, Ser-314, Thr-324 by phosphatase PPP2CA in an IER5-dependent manner, leading to HSF1-mediated transactivation activity. In terms of processing, sumoylated with SUMO1 and SUMO2 upon heat shock in a ERK2-dependent manner. Sumoylated by SUMO1 on Lys-298; sumoylation occurs upon heat shock and promotes its localization to nuclear stress bodies and DNA-binding activity. Phosphorylation on Ser-303 and Ser-307 is probably a prerequisite for sumoylation. Post-translationally, acetylated on Lys-118; this acetylation is decreased in a IER5-dependent manner. Acetylated on Lys-118, Lys-208 and Lys-298; these acetylations occur in a EP300-dependent manner. Acetylated on Lys-80; this acetylation inhibits DNA-binding activity upon heat shock. Deacetylated on Lys-80 by SIRT1; this deacetylation increases DNA-binding activity. Ubiquitinated by SCF(BTRC) and degraded following stimulus-dependent phosphorylation by PLK1 in mitosis. Polyubiquitinated. Undergoes proteasomal degradation upon heat shock and during the attenuation and recovery phase period of the heat shock response.

It is found in the nucleus. Its subcellular location is the cytoplasm. It localises to the nucleoplasm. The protein localises to the perinuclear region. The protein resides in the cytoskeleton. It is found in the spindle pole. Its subcellular location is the microtubule organizing center. It localises to the centrosome. The protein localises to the chromosome. The protein resides in the centromere. It is found in the kinetochore. Its function is as follows. Functions as a stress-inducible and DNA-binding transcription factor that plays a central role in the transcriptional activation of the heat shock response (HSR), leading to the expression of a large class of molecular chaperones, heat shock proteins (HSPs), that protect cells from cellular insult damage. In unstressed cells, is present in a HSP90-containing multichaperone complex that maintains it in a non-DNA-binding inactivated monomeric form. Upon exposure to heat and other stress stimuli, undergoes homotrimerization and activates HSP gene transcription through binding to site-specific heat shock elements (HSEs) present in the promoter regions of HSP genes. Upon heat shock stress, forms a chromatin-associated complex with TTC5/STRAP and p300/EP300 to stimulate HSR transcription, therefore increasing cell survival. Activation is reversible, and during the attenuation and recovery phase period of the HSR, returns to its unactivated form. Binds to inverted 5'-NGAAN-3' pentamer DNA sequences. Binds to chromatin at heat shock gene promoters. Activates transcription of transcription factor FOXR1 which in turn activates transcription of the heat shock chaperones HSPA1A and HSPA6 and the antioxidant NADPH-dependent reductase DHRS2. Also serves several other functions independently of its transcriptional activity. Involved in the repression of Ras-induced transcriptional activation of the c-fos gene in heat-stressed cells. Positively regulates pre-mRNA 3'-end processing and polyadenylation of HSP70 mRNA upon heat-stressed cells in a symplekin (SYMPK)-dependent manner. Plays a role in nuclear export of stress-induced HSP70 mRNA. Plays a role in the regulation of mitotic progression. Also plays a role as a negative regulator of non-homologous end joining (NHEJ) repair activity in a DNA damage-dependent manner. Involved in stress-induced cancer cell proliferation in a IER5-dependent manner. The protein is Heat shock factor protein 1 of Bos taurus (Bovine).